We begin with the raw amino-acid sequence, 346 residues long: Very-long-chain 3-oxoacyl-CoA reductase (346 aa).

The chain crosses the membrane as a helical span at residues 26 to 46; that stretch reads SAYFLLAAGSLFVASRALTFV. 8 residues coordinate NADP(+): Val71, Asp126, Asp134, Asn153, Tyr220, Lys224, Ile253, and Ser255. Tyr220 (proton donor) is an active-site residue. The active-site Lowers pKa of active site Tyr is the Lys224.

It belongs to the short-chain dehydrogenases/reductases (SDR) family.

The protein resides in the endoplasmic reticulum membrane. It carries out the reaction a very-long-chain (3R)-3-hydroxyacyl-CoA + NADP(+) = a very-long-chain 3-oxoacyl-CoA + NADPH + H(+). It functions in the pathway lipid metabolism; fatty acid biosynthesis. In terms of biological role, component of the microsomal membrane bound fatty acid elongation system, which produces the 26-carbon very long-chain fatty acids (VLCFA) from palmitate. Catalyzes the reduction of the 3-ketoacyl-CoA intermediate that is formed in each cycle of fatty acid elongation. VLCFAs serve as precursors for ceramide and sphingolipids. This chain is Very-long-chain 3-oxoacyl-CoA reductase, found in Aspergillus oryzae (strain ATCC 42149 / RIB 40) (Yellow koji mold).